A 275-amino-acid polypeptide reads, in one-letter code: Large ribosomal subunit protein uL2 (275 aa).

Disordered regions lie at residues 1–55 (MGIR…RHRG) and 218–275 (PHVR…RRRR). A compositionally biased stretch (basic residues) spans 259–275 (TRNKKKASSRLIVRRRR).

This sequence belongs to the universal ribosomal protein uL2 family. Part of the 50S ribosomal subunit. Forms a bridge to the 30S subunit in the 70S ribosome.

In terms of biological role, one of the primary rRNA binding proteins. Required for association of the 30S and 50S subunits to form the 70S ribosome, for tRNA binding and peptide bond formation. It has been suggested to have peptidyltransferase activity; this is somewhat controversial. Makes several contacts with the 16S rRNA in the 70S ribosome. This is Large ribosomal subunit protein uL2 from Crocosphaera subtropica (strain ATCC 51142 / BH68) (Cyanothece sp. (strain ATCC 51142)).